The sequence spans 162 residues: Regulatory protein RecX (162 aa).

The protein belongs to the RecX family.

It localises to the cytoplasm. In terms of biological role, modulates RecA activity. This is Regulatory protein RecX from Xanthomonas axonopodis pv. citri (strain 306).